The following is a 271-amino-acid chain: Auxin-responsive protein IAA5 (271 aa).

Residues 1-96 form a disordered region; the sequence is MSPPLEPHDY…RHGASSGSVA (96 aa). 2 stretches are compositionally biased toward low complexity: residues 14–33 and 40–50; these read SAAA…SPNP and PRLTLRLGLPG. The EAR-like (transcriptional repression) signature appears at 44-48; it reads LRLGL. Positions 151-255 constitute a PB1 domain; that stretch reads PLYVKVSMDG…RKLKIMRGSD (105 aa).

The protein belongs to the Aux/IAA family. In terms of assembly, homodimers and heterodimers.

The protein resides in the nucleus. In terms of biological role, aux/IAA proteins are short-lived transcriptional factors that function as repressors of early auxin response genes at low auxin concentrations. In Oryza sativa subsp. japonica (Rice), this protein is Auxin-responsive protein IAA5 (IAA5).